Consider the following 333-residue polypeptide: Fatty acid hydroxylase domain-containing protein 2 (333 aa).

Transmembrane regions (helical) follow at residues phenylalanine 29–leucine 49, isoleucine 77–leucine 97, threonine 134–leucine 154, phenylalanine 168–tyrosine 188, valine 215–valine 235, and proline 237–isoleucine 257. The 124-residue stretch at alanine 176–threonine 299 folds into the Fatty acid hydroxylase domain.

This sequence belongs to the sterol desaturase family. In terms of tissue distribution, down-regulated in primary acute myeloid leukemia (AML) patients.

Its subcellular location is the cytoplasm. The protein localises to the membrane. Its function is as follows. Promotes megakaryocyte differentiation by enhancing ERK phosphorylation and up-regulating RUNX1 expression. The chain is Fatty acid hydroxylase domain-containing protein 2 (FAXDC2) from Homo sapiens (Human).